A 979-amino-acid polypeptide reads, in one-letter code: Protein SMAX1-LIKE 6 (979 aa).

Residues 8 to 190 (ARECLTEEAA…PVTQLSSRFS (183 aa)) form the Clp R domain. Repeat stretches follow at residues 12–86 (LTEE…LDRL) and 100–190 (VSNS…SRFS). Positions 833-837 (LDLNL) match the EAR motif.

This sequence belongs to the ClpA/ClpB family. In terms of assembly, interacts with TPL/TPR in an EAR-motif dependent manner. Interacts with TPR3. Interacts with MAX2 and TPR2. Interacts with D14. The interaction with D14 occurs in the presence of (2'R) stereoisomers of strigolactones, but not (2'S) stereoisomers. Ubiquitinated upon strigolactone treatment. Probable proteolytic target of SCF(MAX2)-mediated stigolactone signaling. As to expression, detected in roots, seedlings and axillary branches. Expressed in the primary rosette buds and expanding leaves of adult rosettes, the vasculature of the hypocotyls, cotyledons, and mature roots, and in the midvein and petioles of young leaves.

It is found in the nucleus. In terms of biological role, probable component of a transcriptional corepressor complex involved in branching control. Regulates cotyledon expansion and lateral root growth, but not germination or hypocotyl elongation. Promotes auxin transport and PIN1 accumulation in the stem and represses BRC1/TCP18 expression in axillary buds. This is Protein SMAX1-LIKE 6 from Arabidopsis thaliana (Mouse-ear cress).